A 165-amino-acid chain; its full sequence is RxLR effector protein CRE12 (165 aa).

The N-terminal stretch at 1-23 is a signal peptide; that stretch reads MRLAAFVLVAVAFAIIPDGRVSA. The short motif at 40–59 is the RxLR-dEER element; that stretch reads RLLRLNAVPQPVETGNQEER.

This sequence belongs to the RxLR effector family.

The protein resides in the secreted. The protein localises to the host cell. In terms of biological role, effector that is involved in host plant infection. Contributes to virulence during the early infection stage, by inhibiting plant defense responses induced by both PAMP-triggered immunity (PTI) and effector-triggered immunity (ETI). This Phytophthora infestans (strain T30-4) (Potato late blight agent) protein is RxLR effector protein CRE12.